Here is a 213-residue protein sequence, read N- to C-terminus: Iron sulfur cluster assembly protein 1, mitochondrial (213 aa).

The protein belongs to the NifU family. Component of the core Fe-S cluster (ISC) assembly machinery. Requires [2Fe-2S] cluster as cofactor.

Its subcellular location is the mitochondrion matrix. It participates in cofactor biosynthesis; iron-sulfur cluster biosynthesis. Its function is as follows. Scaffold protein for the de novo synthesis of iron-sulfur (Fe-S) clusters within mitochondria, which is required for maturation of both mitochondrial and cytoplasmic [2Fe-2S] and [4Fe-4S] proteins. First, a [2Fe-2S] cluster is transiently assembled on the scaffold protein ISU1. In a second step, the cluster is released from ISU1, transferred to a glutaredoxin, followed by the formation of mitochondrial [2Fe-2S] proteins, the synthesis of [4Fe-4S] clusters and their target-specific insertion into the recipient apoproteins. Cluster assembly on ISU1 depends on the function of the cysteine desulfurase complex NFS1-ISD11, which serves as the sulfur donor for cluster synthesis, the iron-binding protein frataxin as the putative iron donor, and the electron transfer chain comprised of ferredoxin reductase and ferredoxin, which receive their electrons from NADH. The protein is Iron sulfur cluster assembly protein 1, mitochondrial (ISU1) of Candida glabrata (strain ATCC 2001 / BCRC 20586 / JCM 3761 / NBRC 0622 / NRRL Y-65 / CBS 138) (Yeast).